Consider the following 142-residue polypeptide: Transcription antitermination protein NusB (142 aa).

The protein belongs to the NusB family.

Functionally, involved in transcription antitermination. Required for transcription of ribosomal RNA (rRNA) genes. Binds specifically to the boxA antiterminator sequence of the ribosomal RNA (rrn) operons. The sequence is that of Transcription antitermination protein NusB from Latilactobacillus sakei subsp. sakei (strain 23K) (Lactobacillus sakei subsp. sakei).